We begin with the raw amino-acid sequence, 426 residues long: Serine hydroxymethyltransferase (426 aa).

Residues Leu-121 and 125-127 (GHL) contribute to the (6S)-5,6,7,8-tetrahydrofolate site. Lys-230 carries the N6-(pyridoxal phosphate)lysine modification. 354-356 (SPF) serves as a coordination point for (6S)-5,6,7,8-tetrahydrofolate.

Belongs to the SHMT family. Homodimer. It depends on pyridoxal 5'-phosphate as a cofactor.

Its subcellular location is the cytoplasm. It catalyses the reaction (6R)-5,10-methylene-5,6,7,8-tetrahydrofolate + glycine + H2O = (6S)-5,6,7,8-tetrahydrofolate + L-serine. The protein operates within one-carbon metabolism; tetrahydrofolate interconversion. It participates in amino-acid biosynthesis; glycine biosynthesis; glycine from L-serine: step 1/1. Its function is as follows. Catalyzes the reversible interconversion of serine and glycine with tetrahydrofolate (THF) serving as the one-carbon carrier. This reaction serves as the major source of one-carbon groups required for the biosynthesis of purines, thymidylate, methionine, and other important biomolecules. Also exhibits THF-independent aldolase activity toward beta-hydroxyamino acids, producing glycine and aldehydes, via a retro-aldol mechanism. In Acaryochloris marina (strain MBIC 11017), this protein is Serine hydroxymethyltransferase.